Here is a 289-residue protein sequence, read N- to C-terminus: BTB/POZ domain-containing protein KCTD7 (289 aa).

Positions 1-10 are enriched in polar residues; it reads MVVVTGQSKG. A disordered region spans residues 1–35; sequence MVVVTGQSKGSGDPDEAMSSSDAEDDFQEPATPTA. Residues 51–149 enclose the BTB domain; the sequence is EVVPLNVGGM…HLEDVQPLKG (99 aa).

The protein localises to the cell membrane. Its subcellular location is the cytoplasm. It is found in the cytosol. Functionally, may be involved in the control of excitability of cortical neurons. In Gallus gallus (Chicken), this protein is BTB/POZ domain-containing protein KCTD7 (KCTD7).